A 351-amino-acid polypeptide reads, in one-letter code: Glycerol-3-phosphate dehydrogenase [NAD(P)+] (351 aa).

NADPH contacts are provided by Ser18, Trp19, Arg38, and Lys122. Sn-glycerol 3-phosphate contacts are provided by Lys122, Gly153, and Ser155. Ala157 contacts NADPH. Sn-glycerol 3-phosphate-binding residues include Lys208, Asp261, Ser271, Arg272, and Asn273. Lys208 acts as the Proton acceptor in catalysis. Arg272 contributes to the NADPH binding site. Glu297 is a binding site for NADPH.

This sequence belongs to the NAD-dependent glycerol-3-phosphate dehydrogenase family.

Its subcellular location is the cytoplasm. It carries out the reaction sn-glycerol 3-phosphate + NAD(+) = dihydroxyacetone phosphate + NADH + H(+). The catalysed reaction is sn-glycerol 3-phosphate + NADP(+) = dihydroxyacetone phosphate + NADPH + H(+). It functions in the pathway membrane lipid metabolism; glycerophospholipid metabolism. Its function is as follows. Catalyzes the reduction of the glycolytic intermediate dihydroxyacetone phosphate (DHAP) to sn-glycerol 3-phosphate (G3P), the key precursor for phospholipid synthesis. In Bordetella bronchiseptica (strain ATCC BAA-588 / NCTC 13252 / RB50) (Alcaligenes bronchisepticus), this protein is Glycerol-3-phosphate dehydrogenase [NAD(P)+].